Reading from the N-terminus, the 175-residue chain is Large ribosomal subunit protein uL10 (175 aa).

The protein belongs to the universal ribosomal protein uL10 family. In terms of assembly, part of the ribosomal stalk of the 50S ribosomal subunit. The N-terminus interacts with L11 and the large rRNA to form the base of the stalk. The C-terminus forms an elongated spine to which L12 dimers bind in a sequential fashion forming a multimeric L10(L12)X complex.

In terms of biological role, forms part of the ribosomal stalk, playing a central role in the interaction of the ribosome with GTP-bound translation factors. This is Large ribosomal subunit protein uL10 from Xylella fastidiosa (strain M12).